A 221-amino-acid polypeptide reads, in one-letter code: Phosphoenolpyruvate guanylyltransferase (221 aa).

3 residues coordinate phosphoenolpyruvate: Thr154, Gly169, and Ser172.

The protein belongs to the CofC family.

The enzyme catalyses phosphoenolpyruvate + GTP + H(+) = enolpyruvoyl-2-diphospho-5'-guanosine + diphosphate. It participates in cofactor biosynthesis; coenzyme F420 biosynthesis. Functionally, guanylyltransferase that catalyzes the activation of phosphoenolpyruvate (PEP) as enolpyruvoyl-2-diphospho-5'-guanosine, via the condensation of PEP with GTP. It is involved in the biosynthesis of coenzyme F420, a hydride carrier cofactor. The chain is Phosphoenolpyruvate guanylyltransferase from Mycolicibacterium smegmatis (strain ATCC 700084 / mc(2)155) (Mycobacterium smegmatis).